The chain runs to 527 residues: Phospholipase A1-Igamma3, chloroplastic (527 aa).

A chloroplast-targeting transit peptide spans 1-52 (MASLSLPITLKNPRFFSSSPQNIFKTQPQTLVLTTKFKTCSIICSSSCTSIS). A compositionally biased stretch (low complexity) spans 55-65 (TTQQKQSNKQT). The tract at residues 55-82 (TTQQKQSNKQTHVSDNKREEKAEEEEEE) is disordered. Basic and acidic residues predominate over residues 66-75 (HVSDNKREEK). Residues 300–304 (GHSLG) carry the GXSXG motif. Serine 302 serves as the catalytic Acyl-ester intermediate. Catalysis depends on charge relay system residues aspartate 366 and histidine 423.

The protein belongs to the AB hydrolase superfamily. Lipase family. In terms of tissue distribution, highly expressed in flowers. Lower levels in seedlings, leaves and stems.

The protein localises to the plastid. Its subcellular location is the chloroplast. It carries out the reaction 1,2-dihexadecanoyl-sn-glycero-3-phosphocholine + H2O = 2-hexadecanoyl-sn-glycero-3-phosphocholine + hexadecanoate + H(+). The catalysed reaction is a 1,2-diacyl-3-O-(beta-D-galactosyl)-sn-glycerol + H2O = an acyl-3-O-(beta-D-galactosyl)-sn-glycerol + a fatty acid + H(+). The enzyme catalyses a 1,2-diacyl-3-O-[alpha-D-galactosyl-(1-&gt;6)-beta-D-galactosyl]-sn-glycerol + H2O = acyl-3-O-[alpha-D-galactosyl-(1-&gt;6)-beta-D-galactosyl]-sn-glycerol + a fatty acid + H(+). Acylhydrolase that catalyzes the hydrolysis of phosphatidylcholine at the sn-1 position. Moderate activity toward phosphatidylcholine (PC), monogalactosyldiacylglycerol (MGDG), digalactosyldiacylglycerol (DGDG) and triacylglycerol (TAG). This is Phospholipase A1-Igamma3, chloroplastic from Arabidopsis thaliana (Mouse-ear cress).